We begin with the raw amino-acid sequence, 170 residues long: uncharacterized protein (170 aa).

In terms of domain architecture, N-acetyltransferase spans 8–167; that stretch reads LLIREFEFKD…DEYYYAILEE (160 aa).

Belongs to the acetyltransferase family.

This is an uncharacterized protein from Bacillus subtilis (strain 168).